Consider the following 565-residue polypeptide: Sulfite reductase [NADPH] hemoprotein beta-component (565 aa).

[4Fe-4S] cluster is bound by residues Cys-429, Cys-435, Cys-474, and Cys-478. Position 478 (Cys-478) interacts with siroheme.

Belongs to the nitrite and sulfite reductase 4Fe-4S domain family. As to quaternary structure, alpha(8)-beta(8). The alpha component is a flavoprotein, the beta component is a hemoprotein. It depends on siroheme as a cofactor. [4Fe-4S] cluster serves as cofactor.

It carries out the reaction hydrogen sulfide + 3 NADP(+) + 3 H2O = sulfite + 3 NADPH + 4 H(+). Its pathway is sulfur metabolism; hydrogen sulfide biosynthesis; hydrogen sulfide from sulfite (NADPH route): step 1/1. In terms of biological role, component of the sulfite reductase complex that catalyzes the 6-electron reduction of sulfite to sulfide. This is one of several activities required for the biosynthesis of L-cysteine from sulfate. The sequence is that of Sulfite reductase [NADPH] hemoprotein beta-component from Shewanella oneidensis (strain ATCC 700550 / JCM 31522 / CIP 106686 / LMG 19005 / NCIMB 14063 / MR-1).